Reading from the N-terminus, the 347-residue chain is UDP-N-acetylglucosamine--N-acetylmuramyl-(pentapeptide) pyrophosphoryl-undecaprenol N-acetylglucosamine transferase (347 aa).

UDP-N-acetyl-alpha-D-glucosamine contacts are provided by residues 11-13 (TGG), asparagine 122, arginine 163, serine 189, and glutamine 279.

It belongs to the glycosyltransferase 28 family. MurG subfamily.

The protein localises to the cell inner membrane. The catalysed reaction is di-trans,octa-cis-undecaprenyl diphospho-N-acetyl-alpha-D-muramoyl-L-alanyl-D-glutamyl-meso-2,6-diaminopimeloyl-D-alanyl-D-alanine + UDP-N-acetyl-alpha-D-glucosamine = di-trans,octa-cis-undecaprenyl diphospho-[N-acetyl-alpha-D-glucosaminyl-(1-&gt;4)]-N-acetyl-alpha-D-muramoyl-L-alanyl-D-glutamyl-meso-2,6-diaminopimeloyl-D-alanyl-D-alanine + UDP + H(+). Its pathway is cell wall biogenesis; peptidoglycan biosynthesis. In terms of biological role, cell wall formation. Catalyzes the transfer of a GlcNAc subunit on undecaprenyl-pyrophosphoryl-MurNAc-pentapeptide (lipid intermediate I) to form undecaprenyl-pyrophosphoryl-MurNAc-(pentapeptide)GlcNAc (lipid intermediate II). The chain is UDP-N-acetylglucosamine--N-acetylmuramyl-(pentapeptide) pyrophosphoryl-undecaprenol N-acetylglucosamine transferase from Sulfurihydrogenibium sp. (strain YO3AOP1).